The primary structure comprises 327 residues: L-lactate dehydrogenase (327 aa).

NAD(+) is bound by residues V18, D39, R44, Y69, and 83–84; that span reads GL. Substrate contacts are provided by residues Q86, R92, and 124–127; that span reads NPVD. NAD(+) contacts are provided by residues 122-124 and S147; that span reads AAN. 152–155 contacts substrate; sequence DSAR. Beta-D-fructose 1,6-bisphosphate-binding residues include R157 and H172. H179 functions as the Proton acceptor in the catalytic mechanism. The residue at position 224 (Y224) is a Phosphotyrosine. T233 is a binding site for substrate.

It belongs to the LDH/MDH superfamily. LDH family. As to quaternary structure, homotetramer.

The protein localises to the cytoplasm. The enzyme catalyses (S)-lactate + NAD(+) = pyruvate + NADH + H(+). Its pathway is fermentation; pyruvate fermentation to lactate; (S)-lactate from pyruvate: step 1/1. Its activity is regulated as follows. Allosterically activated by fructose 1,6-bisphosphate (FBP). Functionally, catalyzes the conversion of lactate to pyruvate. The chain is L-lactate dehydrogenase from Streptococcus suis (strain 98HAH33).